Here is a 502-residue protein sequence, read N- to C-terminus: Lipoyl synthase, apicoplast (502 aa).

The signal sequence occupies residues 1-16 (MNFLVLFFSYSIFVLP). [4Fe-4S] cluster is bound by residues cysteine 192, cysteine 197, cysteine 203, cysteine 218, cysteine 222, cysteine 225, and serine 433. In terms of domain architecture, Radical SAM core spans 204-422 (WNIGTATIML…KDVGLKMGFK (219 aa)).

It belongs to the radical SAM superfamily. Lipoyl synthase family. [4Fe-4S] cluster serves as cofactor.

It is found in the plastid. Its subcellular location is the apicoplast. It catalyses the reaction [[Fe-S] cluster scaffold protein carrying a second [4Fe-4S](2+) cluster] + N(6)-octanoyl-L-lysyl-[protein] + 2 oxidized [2Fe-2S]-[ferredoxin] + 2 S-adenosyl-L-methionine + 4 H(+) = [[Fe-S] cluster scaffold protein] + N(6)-[(R)-dihydrolipoyl]-L-lysyl-[protein] + 4 Fe(3+) + 2 hydrogen sulfide + 2 5'-deoxyadenosine + 2 L-methionine + 2 reduced [2Fe-2S]-[ferredoxin]. It participates in protein modification; protein lipoylation via endogenous pathway; protein N(6)-(lipoyl)lysine from octanoyl-[acyl-carrier-protein]: step 2/2. Functionally, catalyzes the radical-mediated insertion of two sulfur atoms into the C-6 and C-8 positions of the octanoyl moiety bound to the lipoyl domains of lipoate-dependent enzymes, thereby converting the octanoylated domains into lipoylated derivatives. This chain is Lipoyl synthase, apicoplast, found in Plasmodium yoelii yoelii.